The chain runs to 544 residues: NAD(P)H-quinone oxidoreductase chain 4 (544 aa).

Helical transmembrane passes span 29-49, 60-80, 115-135, 139-159, 161-181, 193-213, 234-254, 268-288, 302-322, 339-359, 360-380, 400-422, 442-462, and 488-508; these read FPWL…IPLV, WYAL…YLNG, LILL…PVTF, LFFF…AVQD, LLFF…LAIW, FILY…AMAF, GFQA…LPIV, TAPV…YALF, FAPL…LTSF, MGFV…GAML, QMIS…ATYD, MFAM…GFVS, IVID…LLSM, and IYII…PKLV.

It belongs to the complex I subunit 4 family.

The protein localises to the cellular thylakoid membrane. The catalysed reaction is a plastoquinone + NADH + (n+1) H(+)(in) = a plastoquinol + NAD(+) + n H(+)(out). It catalyses the reaction a plastoquinone + NADPH + (n+1) H(+)(in) = a plastoquinol + NADP(+) + n H(+)(out). In terms of biological role, NDH-1 shuttles electrons from NAD(P)H, via FMN and iron-sulfur (Fe-S) centers, to quinones in the respiratory chain. The immediate electron acceptor for the enzyme in this species is believed to be plastoquinone. Couples the redox reaction to proton translocation (for every two electrons transferred, four hydrogen ions are translocated across the cytoplasmic membrane), and thus conserves the redox energy in a proton gradient. This is NAD(P)H-quinone oxidoreductase chain 4 from Synechococcus sp. (strain RCC307).